Here is an 81-residue protein sequence, read N- to C-terminus: Photosystem I iron-sulfur center (81 aa).

2 4Fe-4S ferredoxin-type domains span residues 2–31 (SHFVKIYDTCIGCTQCVRACPTDVLEMIPW) and 39–68 (IASAPRTEDCVGCKRCESACPTDFLSVRVY). [4Fe-4S] cluster-binding residues include Cys11, Cys14, Cys17, Cys21, Cys48, Cys51, Cys54, and Cys58.

In terms of assembly, the eukaryotic PSI reaction center is composed of at least 11 subunits. Requires [4Fe-4S] cluster as cofactor.

It is found in the plastid thylakoid membrane. The catalysed reaction is reduced [plastocyanin] + hnu + oxidized [2Fe-2S]-[ferredoxin] = oxidized [plastocyanin] + reduced [2Fe-2S]-[ferredoxin]. Its function is as follows. Apoprotein for the two 4Fe-4S centers FA and FB of photosystem I (PSI); essential for photochemical activity. FB is the terminal electron acceptor of PSI, donating electrons to ferredoxin. The C-terminus interacts with PsaA/B/D and helps assemble the protein into the PSI complex. Required for binding of PsaD and PsaE to PSI. PSI is a plastocyanin-ferredoxin oxidoreductase, converting photonic excitation into a charge separation, which transfers an electron from the donor P700 chlorophyll pair to the spectroscopically characterized acceptors A0, A1, FX, FA and FB in turn. This is Photosystem I iron-sulfur center from Cuscuta exaltata (Tall dodder).